The chain runs to 399 residues: MAIIHPKVRGFICTTTHPKGCELNVRDQIEATRKLGVREDGPKKVLVIGASSGYGLAARITAAFGFKADTLGVFFEKPGTETKAGTAGWYNAAAFDKFAKAEGLYSKSINGDAFSDEARAKVIELIKNEMGGQVDLVIYSLASPVRKLPQTGEVIRSALKPIGQPYKSTAIDTNKDTIIEASIEPATEQEIADTVTVMGGQDWELWIDALNAAGVLAPQARTVAFSYIGSDITWPIYWHGALGKAKQDLDETAQRLAGKVGGSANVAVLKSVVTQASSAIPVMPLYLSMVFKIMQEKGVHEGTQDQLDRMFRDRMYRADGSPAELDEKGRLRLDDWELRDDVQGACKALWPQVTTENLFELTDYAGYKKQFLNLFGFERADVNYDEDVATEVKFDCVEL.

NAD(+)-binding positions include 49–54, 75–76, 112–113, and 141–142; these read GASSGY, FE, DA, and LA. Y227 provides a ligand contact to substrate. Y237 serves as the catalytic Proton donor. NAD(+) contacts are provided by residues K246 and 272-274; that span reads VVT.

It belongs to the TER reductase family. As to quaternary structure, monomer.

It catalyses the reaction a 2,3-saturated acyl-[ACP] + NAD(+) = a (2E)-enoyl-[ACP] + NADH + H(+). The protein operates within lipid metabolism; fatty acid biosynthesis. Its function is as follows. Involved in the final reduction of the elongation cycle of fatty acid synthesis (FAS II). Catalyzes the reduction of a carbon-carbon double bond in an enoyl moiety that is covalently linked to an acyl carrier protein (ACP). The polypeptide is Enoyl-[acyl-carrier-protein] reductase [NADH] (Pseudomonas putida (strain W619)).